The primary structure comprises 1010 residues: DENN domain-containing protein 1A (1010 aa).

Positions 13–143 (FEVYIEVNRP…HGHPIPEPGT (131 aa)) constitute a uDENN domain. The 137-residue stretch at 160–296 (ELPSIPENRN…VVSALKNRIR (137 aa)) folds into the cDENN domain. Residues 298–375 (MSTTTGDGVA…DGRLDLLNSG (78 aa)) enclose the dDENN domain. The short motif at 378–382 (FSDVF) is the FXDXF motif element. A disordered region spans residues 455–554 (GFSTATEEPL…EATVKEPQST (100 aa)). Residues 472–482 (IEKKRGEERRP) show a composition bias toward basic and acidic residues. A compositionally biased stretch (basic residues) spans 493–502 (PRPHVPRRPK). Residues 509–524 (SRTTAGSSPDQPQQYR) are compositionally biased toward polar residues. A compositionally biased stretch (basic and acidic residues) spans 538-548 (SPEKDSSEATV). A Clathrin box motif is present at residues 560-569 (SLLEDIFSNL).

It localises to the cytoplasmic vesicle. It is found in the clathrin-coated vesicle membrane. Its subcellular location is the presynaptic cell membrane. Guanine nucleotide exchange factor (GEF) regulating clathrin-mediated endocytosis through RAB35 activation. Promotes the exchange of GDP to GTP, converting inactive GDP-bound RAB35 into its active GTP-bound form. Regulates clathrin-mediated endocytosis of synaptic vesicles and mediates exit from early endosomes. Binds phosphatidylinositol-phosphates (PtdInsPs), with some preference for PtdIns(3)P. The sequence is that of DENN domain-containing protein 1A (dennd1a) from Xenopus laevis (African clawed frog).